Here is a 30-residue protein sequence, read N- to C-terminus: Photosystem I reaction center subunit XII (30 aa).

A helical membrane pass occupies residues 6–26 (VFTILAIALVPAVMAALLGSA).

This sequence belongs to the PsaM family.

It localises to the cellular thylakoid membrane. The sequence is that of Photosystem I reaction center subunit XII from Synechococcus sp. (strain JA-3-3Ab) (Cyanobacteria bacterium Yellowstone A-Prime).